Consider the following 105-residue polypeptide: Nitrogenase-stabilizing/protective protein NifW (105 aa).

This sequence belongs to the NifW family. As to quaternary structure, homotrimer; associates with NifD.

Functionally, may protect the nitrogenase Fe-Mo protein from oxidative damage. The protein is Nitrogenase-stabilizing/protective protein NifW of Rhodospirillum centenum (strain ATCC 51521 / SW).